Reading from the N-terminus, the 144-residue chain is Large ribosomal subunit protein uL15 (144 aa).

A disordered region spans residues 1 to 58 (MKLNNLSPAPGSKHAEKRVGRGIGSGLGKTGGRGHKGQKSRSGGSVKPGFEGGQMPLQ). The segment covering 21 to 31 (RGIGSGLGKTG) has biased composition (gly residues).

This sequence belongs to the universal ribosomal protein uL15 family. Part of the 50S ribosomal subunit.

Binds to the 23S rRNA. The sequence is that of Large ribosomal subunit protein uL15 from Chromohalobacter salexigens (strain ATCC BAA-138 / DSM 3043 / CIP 106854 / NCIMB 13768 / 1H11).